The sequence spans 166 residues: Cofilin-2 (166 aa).

Alanine 2 carries the N-acetylalanine modification. Phosphoserine is present on serine 3. Residues 4–153 (GVTVNDEVIK…KDRSTLGEKL (150 aa)) enclose the ADF-H domain. The residue at position 6 (threonine 6) is a Phosphothreonine. Positions 30 to 34 (KKRKK) match the Nuclear localization signal motif.

It belongs to the actin-binding proteins ADF family. As to quaternary structure, interacts with CSRP3; possibly two molecules of CFL2 can interact with one molecule if CSRP3. In terms of processing, the phosphorylation of Ser-24 may prevent recognition of the nuclear localization signal. As to expression, predominantly expressed in skeletal muscle.

It localises to the nucleus matrix. Its subcellular location is the cytoplasm. The protein localises to the cytoskeleton. Controls reversibly actin polymerization and depolymerization in a pH-sensitive manner. It has the ability to bind G- and F-actin in a 1:1 ratio of cofilin to actin. It is the major component of intranuclear and cytoplasmic actin rods. Required for muscle maintenance. May play a role during the exchange of alpha-actin forms during the early postnatal remodeling of the sarcomere. The polypeptide is Cofilin-2 (Cfl2) (Mus musculus (Mouse)).